We begin with the raw amino-acid sequence, 445 residues long: Fatty acid desaturase 3 (445 aa).

The interval 1 to 21 (MGGVGEPGPREGPAQPGAPLP) is disordered. The Cytoplasmic portion of the chain corresponds to 1-133 (MGGVGEPGPR…DMKLFDASPT (133 aa)). The Cytochrome b5 heme-binding domain occupies 20 to 97 (LPTFCWEQIR…LQPLLIGELA (78 aa)). The chain crosses the membrane as a helical span at residues 134–154 (FFAFLLGHILAMEVLAWLLIY). The Lumenal portion of the chain corresponds to 155–159 (LLGPG). The chain crosses the membrane as a helical span at residues 160–180 (WVPSALAAFILAISQAQSWCL). Residues 181-263 (QHDLGHASIF…KRRYLPYNQQ (83 aa)) are Cytoplasmic-facing. Residues 182–186 (HDLGH) carry the Histidine box-1 motif. A Histidine box-2 motif is present at residues 219–223 (HFQHH). The helical transmembrane segment at 264-284 (HLYFFLIGPPLLTLVNFEVEN) threads the bilayer. Over 285–306 (LAYMLVCMQWADLLWAASFYAR) the chain is Lumenal. Residues 307-327 (FFLSYLPFYGVPGVLLFFVAV) traverse the membrane as a helical segment. The Cytoplasmic segment spans residues 328 to 445 (RVLESHWFVW…DIWLDAYLHQ (118 aa)). The short motif at 383-387 (QIEHH) is the Histidine box-3 element.

This sequence belongs to the fatty acid desaturase type 1 family. As to expression, highly expressed in various organs and tissues including liver, kidney, brain, lung, pancreas, testis, ovary and skeletal muscle (at protein level).

It is found in the endoplasmic reticulum membrane. It carries out the reaction an N-acylsphing-4-enine + 2 Fe(II)-[cytochrome b5] + O2 + 2 H(+) = an N-acyl-sphinga-4E,14Z-dienine + 2 Fe(III)-[cytochrome b5] + 2 H2O. It catalyses the reaction N-(hexanoyl)sphing-4-enine + 2 Fe(II)-[cytochrome b5] + O2 + 2 H(+) = N-hexanoyl-sphinga-4E,14Z-dienine + 2 Fe(III)-[cytochrome b5] + 2 H2O. The catalysed reaction is sphing-4-enine + 2 Fe(II)-[cytochrome b5] + O2 + 2 H(+) = sphinga-4E,14Z-dienine + 2 Fe(III)-[cytochrome b5] + 2 H2O. The enzyme catalyses (11E)-octadecenoyl-CoA + 2 Fe(II)-[cytochrome b5] + O2 + 2 H(+) = (11E,13Z)-octadecadienoyl-CoA + 2 Fe(III)-[cytochrome b5] + 2 H2O. It carries out the reaction N-acyl-1-deoxysphinganine + 2 Fe(II)-[cytochrome b5] + O2 + 2 H(+) = N-acyl-1-deoxysphing-14Z-enine + 2 Fe(III)-[cytochrome b5] + 2 H2O. It catalyses the reaction an N-acylsphinganine + 2 Fe(II)-[cytochrome b5] + O2 + 2 H(+) = an N-acylsphing-14Z-enine + 2 Fe(III)-[cytochrome b5] + 2 H2O. It functions in the pathway lipid metabolism; sphingolipid metabolism. It participates in lipid metabolism; polyunsaturated fatty acid biosynthesis. Its function is as follows. Mammals have different sphingoid bases that differ in their length and/or pattern of desaturation and hydroxyl groups. The predominant sphingoid base that comprises mammalian ceramides is sphing-4-enine (sphingosine or SPH) which has a trans (E) desaturation at carbon 4. FADS3 is a desaturase that introduces a cis (Z) double bond between carbon 14 and carbon 15 of the sphingoid base (also known as long chain base, LCB), producing LCBs such as sphinga-4,14-dienine (SPD, d18:2(4E,14Z)) from SPH. Prefers SPH-containing ceramides (N-acylsphing-4-enines) as substrates. Capable of metabolizing also the SPH in its free form. SPD ceramides occur widely in mammalian tissues and cells. Due to their unusual structure containing a cis double bond, SPD ceramides may have an opposite, negative role in lipid microdomain formation relative to conventional ceramides. Could be involved in the detoxification of 1-deoxy sphingolipids, by desaturating the cytotoxic 1-deoxysphinganine (1-deoxySA, m18:0), produced under pathological conditions, to 1-deoxysphingenine (1-deoxysphingosine, 1-deoxySO, m18:1). Although prefers SPH-containing ceramides (N-acylsphing-4-enines) as substrates, it also exhibits activity toward dihydrosphingosine-containing CERs (N-acylsphinganines) and produces 14Z-SPH-containing sphingolipids,which can be found in patients with DEGS1 mutations. Its desaturase mechanism involves an electron transfer facilitated by cytochrome b5. FADS3 also acts as a methyl-end fatty acyl coenzyme A (CoA) desaturase that introduces a cis double bond between the preexisting double bond and the terminal methyl group of the fatty acyl chain. Desaturates (11E)-octadecenoate (trans-vaccenoate, the predominant trans fatty acid in human milk) at carbon 13 to generate (11E,13Z)-octadecadienoate (also known as conjugated linoleic acid 11E,13Z-CLA). This is Fatty acid desaturase 3 from Homo sapiens (Human).